The following is a 249-amino-acid chain: Type III pantothenate kinase (249 aa).

6 to 13 (DAGNSRIK) contacts ATP. Substrate contacts are provided by residues F77 and 98–101 (GVDR). The active-site Proton acceptor is D100. D121 serves as a coordination point for K(+). Residue S124 coordinates ATP. T177 provides a ligand contact to substrate.

The protein belongs to the type III pantothenate kinase family. Homodimer. It depends on NH4(+) as a cofactor. The cofactor is K(+).

It is found in the cytoplasm. It carries out the reaction (R)-pantothenate + ATP = (R)-4'-phosphopantothenate + ADP + H(+). The protein operates within cofactor biosynthesis; coenzyme A biosynthesis; CoA from (R)-pantothenate: step 1/5. Functionally, catalyzes the phosphorylation of pantothenate (Pan), the first step in CoA biosynthesis. The chain is Type III pantothenate kinase from Teredinibacter turnerae (strain ATCC 39867 / T7901).